The following is a 182-amino-acid chain: Bifunctional protein PyrR (182 aa).

The PRPP-binding signature appears at V98 to S110.

Belongs to the purine/pyrimidine phosphoribosyltransferase family. PyrR subfamily.

The enzyme catalyses UMP + diphosphate = 5-phospho-alpha-D-ribose 1-diphosphate + uracil. Its function is as follows. Regulates the transcription of the pyrimidine nucleotide (pyr) operon in response to exogenous pyrimidines. Also displays a weak uracil phosphoribosyltransferase activity which is not physiologically significant. The chain is Bifunctional protein PyrR from Dehalococcoides mccartyi (strain ATCC BAA-2100 / JCM 16839 / KCTC 5957 / BAV1).